A 220-amino-acid polypeptide reads, in one-letter code: MVVTLGYWDIRGLAHAIRLLLEYTETPYQERRYKAGPAPDFDPSDWTNEKEKLGLDFPNLPYLIDGDVKLTQSNAILRYIARKHNMCGETEVEKQRVDVLENHLMDLRMAFARLCYSPDFEKLKPAYLEQLPGKLRQLSRFLGSRSWFVGDKLTFVDFLAYDVLDQQRMFVPDCPELQGNLSQFLQRFEALEKISAYMRSGRFMKAPIFWYTALWNNKKE.

In terms of domain architecture, GST N-terminal spans 2–88 (VVTLGYWDIR…YIARKHNMCG (87 aa)). Residues 7-8 (YW), 43-46 (PSDW), Lys-50, 59-60 (NL), and 72-73 (QS) contribute to the glutathione site. The 119-residue stretch at 90 to 208 (TEVEKQRVDV…RSGRFMKAPI (119 aa)) folds into the GST C-terminal domain. A substrate-binding site is contributed by Tyr-116.

This sequence belongs to the GST superfamily. Mu family. As to quaternary structure, homodimer.

Its subcellular location is the cytoplasm. The catalysed reaction is RX + glutathione = an S-substituted glutathione + a halide anion + H(+). Functionally, conjugation of reduced glutathione to a wide number of exogenous and endogenous hydrophobic electrophiles. Participates in the formation of novel hepoxilin regioisomers. In Gallus gallus (Chicken), this protein is Glutathione S-transferase 2 (GSTM2).